The sequence spans 988 residues: Squamosa promoter-binding-like protein 16 (988 aa).

Positions 52–79 (GTPVDLTRPSKKVRSGSPGSGGGGGGNY) are disordered. Residues 69–78 (PGSGGGGGGN) show a composition bias toward gly residues. Residues 79 to 156 (YPKCQVDNCK…DGHNRRRRKT (78 aa)) form an SBP-type zinc finger. Zn(2+) is bound by residues Cys82, Cys87, Cys104, His107, Cys123, Cys126, His130, and Cys142. The Bipartite nuclear localization signal motif lies at 139 to 155 (KRSCRRRLDGHNRRRRK). 2 disordered regions span residues 240–262 (RKNPEQPSPMNPQNSMNGASSPS) and 289–416 (GFGN…DTST). 3 stretches are compositionally biased toward polar residues: residues 250-262 (NPQNSMNGASSPS), 301-311 (LTSSDHSATTS), and 327-358 (RTSSTNHSPSQYSDSRGQDTRSSLSLQLFTSS). Residues 368–379 (ASSTKYYSSASS) show a composition bias toward low complexity.

Requires Zn(2+) as cofactor.

Its subcellular location is the nucleus. Trans-acting factor that binds specifically to the consensus nucleotide sequence 5'-TNCGTACAA-3'. The sequence is that of Squamosa promoter-binding-like protein 16 (SPL16) from Arabidopsis thaliana (Mouse-ear cress).